Consider the following 715-residue polypeptide: ATP-dependent DNA helicase Hel308 (715 aa).

Positions 8–36 match the Q motif motif; sequence MPIEDLKLPSNVIEIIKKRGIKKLNPPQT. Residues Gln-35 and 53 to 60 contribute to the ATP site; that span reads SPTGSGKT. A Helicase ATP-binding domain is found at 40–203; it reads KKGLLEGNRL…WLGAEPVATN (164 aa). The DEAH box signature appears at 152 to 155; the sequence is DELH. Residues 236 to 442 enclose the Helicase C-terminal domain; the sequence is HGDDAIIAYT…ERAFYTFLLG (207 aa).

Belongs to the helicase family. Hel308 subfamily. As to quaternary structure, monomer.

The catalysed reaction is Couples ATP hydrolysis with the unwinding of duplex DNA by translocating in the 3'-5' direction.. It catalyses the reaction ATP + H2O = ADP + phosphate + H(+). Its function is as follows. DNA-dependent ATPase and 3'-5' DNA helicase that may be involved in repair of stalled replication forks. A low processivity 3'-5' helicase. Unwinds short dsDNA substrates with 3'-overhangs (25 bp dsDNA with 25 base overhang), less active on longer dsDNA substrates. Also unwinds the lagging strand of a stalled replication fork (but the leading strand was not tested). Binds ssDNA, but dsDNA about 35-fold less well. Able to displace streptavidin from biotinylated ssDNA, which is partially inhibited by DNA-binding proteins, suggesting it may play a role in stripping proteins from stalled replication forks. The sequence is that of ATP-dependent DNA helicase Hel308 from Saccharolobus solfataricus (strain 98/2) (Sulfolobus solfataricus).